We begin with the raw amino-acid sequence, 396 residues long: KiSS-1 receptor (396 aa).

Residues 1 to 43 (MATEATLAPNVTWWAPSNASGCPGCGVNASDDPGSAPRPLDAW) lie on the Extracellular side of the membrane. Asparagine 10, asparagine 18, and asparagine 28 each carry an N-linked (GlcNAc...) asparagine glycan. The chain crosses the membrane as a helical span at residues 44 to 66 (LVPLFFATLMLLGLVGNSLVIYV). At 67-78 (ICRHKHMQTVTN) the chain is on the cytoplasmic side. A helical transmembrane segment spans residues 79-101 (FYIANLAATDVTFLLCCVPFTAL). The Extracellular portion of the chain corresponds to 102-116 (LYPLPAWVLGDFMCK). Residues cysteine 115 and cysteine 191 are joined by a disulfide bond. Residues 117-138 (FVNYIQQVSVQATCATLTAMSV) form a helical membrane-spanning segment. At 139-157 (DRWYVTVFPLRALHRRTPR) the chain is on the cytoplasmic side. Residues 158–180 (LALAVSLSIWVGSAAVSAPVLAL) form a helical membrane-spanning segment. Over 181 to 203 (HRLSPGPRTYCSEAFPSRALERA) the chain is Extracellular. The chain crosses the membrane as a helical span at residues 204–224 (FALYNLLALYLLPLLATCACY). The Cytoplasmic portion of the chain corresponds to 225-260 (GAMLRHLGRAAVRPAPTDGALQGQLLAQRAGAVRTK). Residues 261 to 283 (VSRLVAAVVLLFAACWGPIQLFL) form a helical membrane-spanning segment. The Extracellular portion of the chain corresponds to 284 to 305 (VLQALGPSGAWHPRSYAAYAVK). Residues 306 to 330 (IWAHCMSYSNSALNPLLYAFLGSHF) traverse the membrane as a helical segment. Topologically, residues 331–396 (RQAFCRVCPC…CAQSERTASL (66 aa)) are cytoplasmic. The interval 349–396 (HTSAHSDRAATHTVPHSRAAHPVRIRSPEPGNPVVRSPCAQSERTASL) is disordered. Residues 387-396 (CAQSERTASL) are compositionally biased toward polar residues.

The protein belongs to the G-protein coupled receptor 1 family. Highest level in the heart and 15- and 17-day embryos. Low level in other tissues. Colocalized with gonadotropin-releasing hormone (GnRH) neurons in the hypothalamus.

It is found in the cell membrane. In terms of biological role, receptor for metastin (kisspeptin-52 or kp-52), a C-terminally amidated peptide of KiSS1. KiSS1 is a metastasis suppressor protein. Activation of the receptor inhibits cell proliferation and cell migration, key characteristics of tumor metastasis. The receptor is essential for normal gonadotropin-released hormone physiology and for puberty. The hypothalamic KiSS1/KISS1R system is a pivotal factor in central regulation of the gonadotropic axis at puberty and in adulthood. Analysis of the transduction pathways activated by the receptor identifies coupling to phospholipase C and intracellular calcium release through pertussis toxin-insensitive G(q) proteins. The sequence is that of KiSS-1 receptor (Kiss1r) from Mus musculus (Mouse).